A 245-amino-acid chain; its full sequence is Ribonuclease PH (245 aa).

Phosphate-binding positions include arginine 86 and 124-126 (GTR).

The protein belongs to the RNase PH family. As to quaternary structure, homohexameric ring arranged as a trimer of dimers.

The enzyme catalyses tRNA(n+1) + phosphate = tRNA(n) + a ribonucleoside 5'-diphosphate. In terms of biological role, phosphorolytic 3'-5' exoribonuclease that plays an important role in tRNA 3'-end maturation. Removes nucleotide residues following the 3'-CCA terminus of tRNAs; can also add nucleotides to the ends of RNA molecules by using nucleoside diphosphates as substrates, but this may not be physiologically important. Probably plays a role in initiation of 16S rRNA degradation (leading to ribosome degradation) during starvation. The protein is Ribonuclease PH of Bacillus velezensis (strain DSM 23117 / BGSC 10A6 / LMG 26770 / FZB42) (Bacillus amyloliquefaciens subsp. plantarum).